The following is a 301-amino-acid chain: Asialoglycoprotein receptor 2 (301 aa).

A disordered region spans residues 1–43 (MEKDCQDIQQLDSEENDHQLSGDDEHGSHVQDPRIENPHWKGQ). Over 1-58 (MEKDCQDIQQLDSEENDHQLSGDDEHGSHVQDPRIENPHWKGQPLSRPFPQRLCSTFR) the chain is Cytoplasmic. Position 13 is a phosphoserine (Ser-13). The segment covering 16–39 (NDHQLSGDDEHGSHVQDPRIENPH) has biased composition (basic and acidic residues). Cys-54 carries the S-palmitoyl cysteine lipid modification. The chain crosses the membrane as a helical; Signal-anchor for type II membrane protein span at residues 59 to 79 (LSLLALAFNILLLVVICVVSS). Residues 80–301 (QSIQLQEEFR…VCEKRRNITH (222 aa)) lie on the Extracellular side of the membrane. 2 N-linked (GlcNAc...) asparagine glycosylation sites follow: Asn-97 and Asn-165. Residues 169 to 295 (CCPVNWVEFG…QQVNRWVCEK (127 aa)) enclose the C-type lectin domain. Disulfide bonds link Cys-170–Cys-181, Cys-198–Cys-293, and Cys-271–Cys-285. N-linked (GlcNAc...) asparagine glycosylation occurs at Asn-298.

Interacts with LASS2. Expressed exclusively in hepatic parenchymal cells.

It is found in the membrane. Functionally, mediates the endocytosis of plasma glycoproteins to which the terminal sialic acid residue on their complex carbohydrate moieties has been removed. The receptor recognizes terminal galactose and N-acetylgalactosamine units. After ligand binding to the receptor, the resulting complex is internalized and transported to a sorting organelle, where receptor and ligand are disassociated. The receptor then returns to the cell membrane surface. The sequence is that of Asialoglycoprotein receptor 2 (Asgr2) from Mus musculus (Mouse).